The chain runs to 257 residues: uncharacterized protein (257 aa).

The N-terminal stretch at 1–22 is a signal peptide; sequence MGYLKRFALYISVMILMFAIAG. A lipid anchor (N-palmitoyl cysteine) is attached at Cys23. The S-diacylglycerol cysteine moiety is linked to residue Cys23.

The protein belongs to the staphylococcal tandem lipoprotein family.

It is found in the cell membrane. This is an uncharacterized protein from Staphylococcus aureus (strain MRSA252).